The sequence spans 746 residues: Exocyst complex component 3-like protein (746 aa).

The segment at 1-23 (MDSAAKDEMQPALSPGPEWPEQE) is disordered. A mediates interaction with EXOC2, EXOC4 and EXOC5 region spans residues 1 to 370 (MDSAAKDEMQ…DVSQLEPLLT (370 aa)).

Belongs to the SEC6 family. As to quaternary structure, interacts with EXOC2, EXOC4 and EXOC5; may be part of the exocyst.

The protein localises to the cytoplasmic vesicle. The protein resides in the secretory vesicle. Functionally, as part of the exocyst, may play a role in regulated exocytosis of insulin granules. The sequence is that of Exocyst complex component 3-like protein (EXOC3L1) from Homo sapiens (Human).